We begin with the raw amino-acid sequence, 129 residues long: Fluoride-specific ion channel FluC (129 aa).

The next 4 helical transmembrane spans lie at 6 to 26 (ILAI…FNGI), 35 to 55 (IPFG…ILIA), 73 to 93 (TGVL…FLLL), and 98 to 118 (IALA…MAGG). Na(+) contacts are provided by glycine 77 and threonine 80.

It belongs to the fluoride channel Fluc/FEX (TC 1.A.43) family.

Its subcellular location is the cell inner membrane. The catalysed reaction is fluoride(in) = fluoride(out). Its activity is regulated as follows. Na(+) is not transported, but it plays an essential structural role and its presence is essential for fluoride channel function. Functionally, fluoride-specific ion channel. Important for reducing fluoride concentration in the cell, thus reducing its toxicity. The sequence is that of Fluoride-specific ion channel FluC from Sulfurimonas denitrificans (strain ATCC 33889 / DSM 1251) (Thiomicrospira denitrificans (strain ATCC 33889 / DSM 1251)).